A 142-amino-acid polypeptide reads, in one-letter code: Large ribosomal subunit protein uL22c (142 aa).

Belongs to the universal ribosomal protein uL22 family. In terms of assembly, part of the 50S ribosomal subunit.

Its subcellular location is the plastid. It is found in the chloroplast. Its function is as follows. This protein binds specifically to 23S rRNA. Functionally, the globular domain of the protein is located near the polypeptide exit tunnel on the outside of the subunit, while an extended beta-hairpin is found that lines the wall of the exit tunnel in the center of the 70S ribosome. The polypeptide is Large ribosomal subunit protein uL22c (rpl22) (Pinus koraiensis (Korean pine)).